Reading from the N-terminus, the 472-residue chain is Inhibitor of Apoptosis OPG037 (472 aa).

6 ANK repeats span residues 97–126, 130–161, 233–263, 267–297, 322–351, and 353–377; these read DGNYPLHIASKINNNRIVAMLLTHGADPNA, HNKTPLYYLSGTDDEVIERINLLVQYGAKINN, DGNTPLHIVCSKTVKNVDIIDLLLPSTDVNK, FGDSPLTLLIKTLSPAHLINKLLSTSNVITD, YDSTDFKMAVEVGSIRCVKYLLDNDIICED, and MYYAVLSEYETMVDYLLFNHFSVDF.

It belongs to the orthopoxvirus OPG037 protein family. May interact with host caspase-9-Apaf-1 complex.

It is found in the host cytoplasm. Its function is as follows. Inhibits host apoptosis. Acts by associating with host apoptosome. The polypeptide is Inhibitor of Apoptosis OPG037 (OPG037) (Vaccinia virus (strain Western Reserve) (VACV)).